The chain runs to 333 residues: Putative F-box protein At4g11580 (333 aa).

Residues 11-58 enclose the F-box domain; the sequence is VSEWADLNKDILELIFNKLDVMDITMGASRVCISWFLASHNKTLWNTV.

The sequence is that of Putative F-box protein At4g11580 from Arabidopsis thaliana (Mouse-ear cress).